The following is a 451-amino-acid chain: Serine--tRNA ligase (451 aa).

Position 247-249 (247-249 (TAE)) interacts with L-serine. ATP is bound by residues 278–280 (RKE) and valine 294. Position 301 (glutamate 301) interacts with L-serine. 365 to 368 (ELAS) is a binding site for ATP. Threonine 400 lines the L-serine pocket.

It belongs to the class-II aminoacyl-tRNA synthetase family. Type-1 seryl-tRNA synthetase subfamily. In terms of assembly, homodimer. The tRNA molecule binds across the dimer.

It localises to the cytoplasm. The catalysed reaction is tRNA(Ser) + L-serine + ATP = L-seryl-tRNA(Ser) + AMP + diphosphate + H(+). It catalyses the reaction tRNA(Sec) + L-serine + ATP = L-seryl-tRNA(Sec) + AMP + diphosphate + H(+). It participates in aminoacyl-tRNA biosynthesis; selenocysteinyl-tRNA(Sec) biosynthesis; L-seryl-tRNA(Sec) from L-serine and tRNA(Sec): step 1/1. Catalyzes the attachment of serine to tRNA(Ser). Is also able to aminoacylate tRNA(Sec) with serine, to form the misacylated tRNA L-seryl-tRNA(Sec), which will be further converted into selenocysteinyl-tRNA(Sec). The sequence is that of Serine--tRNA ligase from Pyrobaculum aerophilum (strain ATCC 51768 / DSM 7523 / JCM 9630 / CIP 104966 / NBRC 100827 / IM2).